The sequence spans 376 residues: 26S proteasome non-ATPase regulatory subunit 13 (376 aa).

The PCI domain occupies 171-338 (SYYKDALRFL…KRVHMTWVQP (168 aa)).

The protein belongs to the proteasome subunit S11 family. Component of the 19S proteasome regulatory particle complex. The 26S proteasome consists of a 20S core particle (CP) and two 19S regulatory subunits (RP). The regulatory particle is made of a lid composed of 9 subunits including PSMD13, a base containing 6 ATPases and few additional components.

Its function is as follows. Component of the 26S proteasome, a multiprotein complex involved in the ATP-dependent degradation of ubiquitinated proteins. This complex plays a key role in the maintenance of protein homeostasis by removing misfolded or damaged proteins, which could impair cellular functions, and by removing proteins whose functions are no longer required. Therefore, the proteasome participates in numerous cellular processes, including cell cycle progression, apoptosis, or DNA damage repair. The polypeptide is 26S proteasome non-ATPase regulatory subunit 13 (PSMD13) (Bos taurus (Bovine)).